A 328-amino-acid chain; its full sequence is Ferredoxin--NADP reductase 1 (328 aa).

Residues Glu37, Lys45, Tyr49, Val89, and Thr310 each contribute to the FAD site.

It belongs to the ferredoxin--NADP reductase type 2 family. In terms of assembly, homodimer. The cofactor is FAD.

The catalysed reaction is 2 reduced [2Fe-2S]-[ferredoxin] + NADP(+) + H(+) = 2 oxidized [2Fe-2S]-[ferredoxin] + NADPH. This Latilactobacillus sakei subsp. sakei (strain 23K) (Lactobacillus sakei subsp. sakei) protein is Ferredoxin--NADP reductase 1.